Here is a 294-residue protein sequence, read N- to C-terminus: uncharacterized protein (294 aa).

The interval 181–204 (DEPFPTTKNHNNDKRETNDKDDQQ) is disordered. The span at 190 to 204 (HNNDKRETNDKDDQQ) shows a compositional bias: basic and acidic residues.

This sequence belongs to the IIV-6 391R family.

This is an uncharacterized protein from Acheta domesticus (House cricket).